Consider the following 465-residue polypeptide: Serine carboxypeptidase-like 46 (465 aa).

The first 25 residues, methionine 1–serine 25, serve as a signal peptide directing secretion. Disulfide bonds link cysteine 88-cysteine 344, cysteine 245-cysteine 263, and cysteine 288-cysteine 313. 2 N-linked (GlcNAc...) asparagine glycosylation sites follow: asparagine 137 and asparagine 170. Serine 179 is an active-site residue. The N-linked (GlcNAc...) asparagine glycan is linked to asparagine 246. Catalysis depends on residues aspartate 381 and histidine 438.

This sequence belongs to the peptidase S10 family. Ubiquitous.

It localises to the secreted. Functionally, probable carboxypeptidase. This chain is Serine carboxypeptidase-like 46 (SCPL46), found in Arabidopsis thaliana (Mouse-ear cress).